The sequence spans 347 residues: UDP-N-acetylenolpyruvoylglucosamine reductase (347 aa).

Residues 17 to 187 (IEQLAAQLVV…TAVGLKFAKA (171 aa)) form the FAD-binding PCMH-type domain. R163 is a catalytic residue. S232 serves as the catalytic Proton donor. Residue E327 is part of the active site.

Belongs to the MurB family. The cofactor is FAD.

The protein localises to the cytoplasm. It carries out the reaction UDP-N-acetyl-alpha-D-muramate + NADP(+) = UDP-N-acetyl-3-O-(1-carboxyvinyl)-alpha-D-glucosamine + NADPH + H(+). It participates in cell wall biogenesis; peptidoglycan biosynthesis. Functionally, cell wall formation. The polypeptide is UDP-N-acetylenolpyruvoylglucosamine reductase (Vibrio cholerae serotype O1 (strain ATCC 39315 / El Tor Inaba N16961)).